The following is a 473-amino-acid chain: Glycosyl hydrolase family 109 protein 2 (473 aa).

Positions 1-31 (MSIFSSRRQFLKSLGLAAGAAAAGNALPGKA) form a signal peptide, tat-type signal. NAD(+) is bound by residues 77–78 (GR), aspartate 99, 148–151 (WSSH), 168–169 (EV), and asparagine 197. Residues tyrosine 226, arginine 244, 256 to 259 (YPTH), and tyrosine 339 each bind substrate. Tyrosine 256 provides a ligand contact to NAD(+).

Belongs to the Gfo/Idh/MocA family. Glycosyl hydrolase 109 subfamily. The cofactor is NAD(+). Post-translationally, predicted to be exported by the Tat system. The position of the signal peptide cleavage has not been experimentally proven.

Its function is as follows. Glycosidase. The sequence is that of Glycosyl hydrolase family 109 protein 2 from Akkermansia muciniphila (strain ATCC BAA-835 / DSM 22959 / JCM 33894 / BCRC 81048 / CCUG 64013 / CIP 107961 / Muc).